A 449-amino-acid polypeptide reads, in one-letter code: AP-4 complex subunit mu-1 (449 aa).

Residues 184–448 (KNEVFLDVVE…LSHSNAYVIR (265 aa)) enclose the MHD domain.

Belongs to the adaptor complexes medium subunit family. Adaptor protein complex 4 (AP-4) is a heterotetramer composed of two large adaptins (epsilon-type subunit AP4E1 and beta-type subunit AP4B1), a medium adaptin (mu-type subunit AP4M1) and a small adaptin (sigma-type AP4S1). Interacts with tyrosine-based sorting signals on the cytoplasmic tail of cargo proteins such as APP, ATG9A, LAMP2 and NAGPA. Interacts with the C-terminal domain of GRID2. Interacts with GRIA1 and GRIA2; the interaction is indirect via CACNG3. Interacts with CACNG3; CACNG3 associates GRIA1 and GRIA2 with the adaptor protein complex 4 (AP-4) to target them to the somatodendritic compartment of neurons. Interacts with HOOK1 and HOOK2; the interactions are direct, mediate the interaction between FTS-Hook-FHIP (FHF) complex and AP-4 and the perinuclear distribution of AP-4.

The protein resides in the golgi apparatus. It is found in the trans-Golgi network membrane. The protein localises to the early endosome. Functionally, component of the adaptor protein complex 4 (AP-4). Adaptor protein complexes are vesicle coat components involved both in vesicle formation and cargo selection. They control the vesicular transport of proteins in different trafficking pathways. AP-4 forms a non clathrin-associated coat on vesicles departing the trans-Golgi network (TGN) and may be involved in the targeting of proteins from the trans-Golgi network (TGN) to the endosomal-lysosomal system. It is also involved in protein sorting to the basolateral membrane in epithelial cells and the proper asymmetric localization of somatodendritic proteins in neurons. Within AP-4, the mu-type subunit AP4M1 is directly involved in the recognition and binding of tyrosine-based sorting signals found in the cytoplasmic part of cargos. The adaptor protein complex 4 (AP-4) may also recognize other types of sorting signal. This is AP-4 complex subunit mu-1 from Mus musculus (Mouse).